The sequence spans 683 residues: UvrABC system protein B (683 aa).

In terms of domain architecture, Helicase ATP-binding spans 31 to 414; sequence AGFEKGYKEQ…ELERTDHKVE (384 aa). Residue 44–51 participates in ATP binding; sequence GATGTGKT. The Beta-hairpin signature appears at 97-120; the sequence is YYDYYQPEAYVPQSDTYIEKDSAI. A Helicase C-terminal domain is found at 435–601; it reads QIDDLVGEIN…TIIKPVHDVI (167 aa). The region spanning 632–667 is the UVR domain; it reads KTMIKNLQEQMKEAAKKLDFEEAANLRDAIMELQSS. The tract at residues 662–683 is disordered; it reads MELQSSSRRPKTRKGKALNGKR. Basic residues predominate over residues 669-683; that stretch reads RRPKTRKGKALNGKR.

It belongs to the UvrB family. As to quaternary structure, forms a heterotetramer with UvrA during the search for lesions. Interacts with UvrC in an incision complex.

It localises to the cytoplasm. Functionally, the UvrABC repair system catalyzes the recognition and processing of DNA lesions. A damage recognition complex composed of 2 UvrA and 2 UvrB subunits scans DNA for abnormalities. Upon binding of the UvrA(2)B(2) complex to a putative damaged site, the DNA wraps around one UvrB monomer. DNA wrap is dependent on ATP binding by UvrB and probably causes local melting of the DNA helix, facilitating insertion of UvrB beta-hairpin between the DNA strands. Then UvrB probes one DNA strand for the presence of a lesion. If a lesion is found the UvrA subunits dissociate and the UvrB-DNA preincision complex is formed. This complex is subsequently bound by UvrC and the second UvrB is released. If no lesion is found, the DNA wraps around the other UvrB subunit that will check the other stand for damage. This Lactobacillus acidophilus (strain ATCC 700396 / NCK56 / N2 / NCFM) protein is UvrABC system protein B.